Consider the following 144-residue polypeptide: Maximins 1/H12 (144 aa).

Residues 1–18 (MNFKYIVAVSFLIASAYA) form the signal peptide. Positions 19–43 (RSEENDEQSLSQRDVLEEESLREIR) are excised as a propeptide. An Asparagine amide modification is found at Asn70. The propeptide occupies 74–123 (TAEEHEVMKRLEVVMRDLDSLDYPEEASERETRDFNQEEIANLYTKKEKR). At Ile143 the chain carries Isoleucine amide.

Belongs to the bombinin family. As to expression, expressed by the skin glands.

Its subcellular location is the secreted. Functionally, maximin-1 shows antibacterial activity against both Gram-positive and Gram-negative bacteria. It also shows antimicrobial activity against the fungus C.albicans, but not against A.flavus nor P.uticale. It has little hemolytic activity. It possess a significant cytotoxicity against tumor cell lines. It does not possess a significant anti-HIV activity. It shows high spermicidal activity. Maximin-H12 shows antimicrobial activity against bacteria and against the fungus C.albicans. Shows strong hemolytic activity. This Bombina maxima (Giant fire-bellied toad) protein is Maximins 1/H12.